The chain runs to 464 residues: 3-isopropylmalate dehydratase large subunit (464 aa).

Residues Cys-337, Cys-397, and Cys-400 each contribute to the [4Fe-4S] cluster site.

This sequence belongs to the aconitase/IPM isomerase family. LeuC type 1 subfamily. In terms of assembly, heterodimer of LeuC and LeuD. [4Fe-4S] cluster is required as a cofactor.

The catalysed reaction is (2R,3S)-3-isopropylmalate = (2S)-2-isopropylmalate. It participates in amino-acid biosynthesis; L-leucine biosynthesis; L-leucine from 3-methyl-2-oxobutanoate: step 2/4. In terms of biological role, catalyzes the isomerization between 2-isopropylmalate and 3-isopropylmalate, via the formation of 2-isopropylmaleate. The polypeptide is 3-isopropylmalate dehydratase large subunit (Bacillus anthracis (strain A0248)).